Reading from the N-terminus, the 101-residue chain is Large ribosomal subunit protein uL24 (101 aa).

This sequence belongs to the universal ribosomal protein uL24 family. As to quaternary structure, part of the 50S ribosomal subunit.

One of two assembly initiator proteins, it binds directly to the 5'-end of the 23S rRNA, where it nucleates assembly of the 50S subunit. In terms of biological role, one of the proteins that surrounds the polypeptide exit tunnel on the outside of the subunit. The chain is Large ribosomal subunit protein uL24 from Borreliella afzelii (strain PKo) (Borrelia afzelii).